Consider the following 317-residue polypeptide: Large ribosomal subunit protein uL10 (317 aa).

This sequence belongs to the universal ribosomal protein uL10 family. In terms of assembly, P0 forms a pentameric complex by interaction with dimers of P1 and P2. Phosphorylated.

Ribosomal protein P0 is the functional equivalent of E.coli protein L10. This Ictalurus punctatus (Channel catfish) protein is Large ribosomal subunit protein uL10 (rplp0).